Consider the following 258-residue polypeptide: Small ribosomal subunit protein uS15m (258 aa).

A mitochondrion-targeting transit peptide spans 1–57 (MLRAAWRALSSVRAQAVTRAPVPALRGGSSASLLSARCGLQPPSLLRAARAYAAVQK). The tract at residues 229–258 (KAAAAAAKKEKNEGVPENPSNAVPEKTQVN) is disordered.

It belongs to the universal ribosomal protein uS15 family. Component of the mitochondrial ribosome small subunit (28S) which comprises a 12S rRNA and about 30 distinct proteins. Interacts with METTL17.

The protein resides in the mitochondrion matrix. The chain is Small ribosomal subunit protein uS15m (Mrps15) from Mus musculus (Mouse).